The sequence spans 453 residues: Ribosomal protein uS12 methylthiotransferase RimO (453 aa).

An MTTase N-terminal domain is found at 5 to 120; sequence PKVGFVSLGC…VMQAVHSHLP (116 aa). [4Fe-4S] cluster is bound by residues Cys-14, Cys-50, Cys-79, Cys-151, Cys-155, and Cys-158. The Radical SAM core domain occupies 137–383; the sequence is LTPRHYAYLK…EVAEEVSAHR (247 aa). The TRAM domain occupies 385 to 453; that stretch reads QRKVGKTLKV…ADGHDLWGEV (69 aa).

Belongs to the methylthiotransferase family. RimO subfamily. The cofactor is [4Fe-4S] cluster.

It is found in the cytoplasm. It catalyses the reaction L-aspartate(89)-[ribosomal protein uS12]-hydrogen + (sulfur carrier)-SH + AH2 + 2 S-adenosyl-L-methionine = 3-methylsulfanyl-L-aspartate(89)-[ribosomal protein uS12]-hydrogen + (sulfur carrier)-H + 5'-deoxyadenosine + L-methionine + A + S-adenosyl-L-homocysteine + 2 H(+). Its function is as follows. Catalyzes the methylthiolation of an aspartic acid residue of ribosomal protein uS12. The chain is Ribosomal protein uS12 methylthiotransferase RimO from Burkholderia cenocepacia (strain ATCC BAA-245 / DSM 16553 / LMG 16656 / NCTC 13227 / J2315 / CF5610) (Burkholderia cepacia (strain J2315)).